We begin with the raw amino-acid sequence, 762 residues long: MAIQTSNLGYPRIGLQREWKKTLEAFWSNKIDEEQFLTTMKEIRLQHVKVQQEKGIELIPVGDFTYYDHVLDTAYMLGFIPSRFSEFTSYLDVYFAMARGSKDHVASEMTKWFNTNYHYIVPEYEEGLQISLKDNRPLRLYEEAKKELGVDGKPVILGPYTFLKLAKGYNEEQFATILKELVAPYVQLFSELHAAGAQIIQVDEPIFASLTKDEINQAKELYEAIHKEVPNANLLLQTYFDSVEENYEEIIAFPVSGIGLDFVHGKEGNVNAISKYGFPADKILAIGCIDGRNIWRADLDDVLSLFTTLQNQITAKGLIVQPSCSLLHTPIDKTEETHLTSELFDALAFANQKLEELVLIHSALTKGVESISSDLTTYRNAHHAIRSSAARNREDVKVARTSLKEDDFSRPLPFEKRYELQQVALQLPLLPTTTIGSFPQTSEVRQTRKQWRNGDITNEQYNQFIEKETAKWIRYQEDIGLDVLVHGEFERTDMVEYFGERLAGFSFTKNGWVQSYGSRCVKPPVIYGDVAFISGMTIKETVYAQSLTEKVVKGMLTGPVTILNWSFVRNDISRKEVSYQIALALRHEIELLESSGIRVIQVDEPALREGMPLKEKDWDAYITWAVQSFLLATSSVENETQIHTHMCYSNFEDIVDAIRALDADVISIETSRSHGEFINTLKHTTYEKGIGLGVYDIHSPRVPSKDEMFTIVEQSLQVCDPKYFWINPDCGLKTRRTEEVIPALEHMVQAAKDARSLLKTNA.

Residues 17-20 and Lys-111 contribute to the 5-methyltetrahydropteroyltri-L-glutamate site; that span reads REWK. L-homocysteine is bound by residues 435–437 and Glu-488; that span reads IGS. L-methionine is bound by residues 435–437 and Glu-488; that span reads IGS. Residues 519 to 520 and Trp-565 each bind 5-methyltetrahydropteroyltri-L-glutamate; that span reads RC. Residue Asp-603 participates in L-homocysteine binding. Asp-603 lines the L-methionine pocket. Position 609 (Glu-609) interacts with 5-methyltetrahydropteroyltri-L-glutamate. Residues His-645, Cys-647, and Glu-669 each contribute to the Zn(2+) site. The active-site Proton donor is the His-698. Position 730 (Cys-730) interacts with Zn(2+).

This sequence belongs to the vitamin-B12 independent methionine synthase family. Zn(2+) is required as a cofactor.

The enzyme catalyses 5-methyltetrahydropteroyltri-L-glutamate + L-homocysteine = tetrahydropteroyltri-L-glutamate + L-methionine. Its pathway is amino-acid biosynthesis; L-methionine biosynthesis via de novo pathway; L-methionine from L-homocysteine (MetE route): step 1/1. Catalyzes the transfer of a methyl group from 5-methyltetrahydrofolate to homocysteine resulting in methionine formation. The sequence is that of 5-methyltetrahydropteroyltriglutamate--homocysteine methyltransferase from Bacillus mycoides (strain KBAB4) (Bacillus weihenstephanensis).